The chain runs to 248 residues: Large ribosomal subunit protein uL2 (248 aa).

Residues 203 to 248 (AHPAGGGHHPKGLTPAPRNAPPGRKVGHIAPRRTGRKKGASRTPTQ) form a disordered region. The segment covering 227 to 242 (KVGHIAPRRTGRKKGA) has biased composition (basic residues).

The protein belongs to the universal ribosomal protein uL2 family. Part of the 50S ribosomal subunit. Forms a bridge to the 30S subunit in the 70S ribosome.

Functionally, one of the primary rRNA binding proteins. Required for association of the 30S and 50S subunits to form the 70S ribosome, for tRNA binding and peptide bond formation. It has been suggested to have peptidyltransferase activity; this is somewhat controversial. Makes several contacts with the 16S rRNA in the 70S ribosome. In Thermofilum pendens (strain DSM 2475 / Hrk 5), this protein is Large ribosomal subunit protein uL2.